The chain runs to 1185 residues: 205 kDa microtubule-associated protein (1185 aa).

The span at 146 to 159 (EPNQLPEQLQQQQQ) shows a compositional bias: low complexity. Residues 146 to 196 (EPNQLPEQLQQQQQIESQGVHEDPRQEDEDEHSSVATTYGTSSLSENNSSP) are disordered. The segment covering 179 to 196 (SVATTYGTSSLSENNSSP) has biased composition (polar residues). 2 positions are modified to phosphoserine: Ser-354 and Ser-448. Tyr-450 is modified (phosphotyrosine). Ser-709, Ser-710, and Ser-712 each carry phosphoserine. Phosphothreonine is present on Thr-721. Position 728 is a phosphoserine (Ser-728). Positions 745–977 (TAADGQSISQ…ASTKVRPAAT (233 aa)) are microtubule-binding. The span at 856–866 (SIATKTSTTSS) shows a compositional bias: low complexity. 2 disordered regions span residues 856–1035 (SIAT…TSTA) and 1054–1114 (SASL…SSPA). Polar residues-rich tracts occupy residues 867–881 (LTGNPRKSLSSNVGS) and 908–936 (TITNKPTASGTASDNVTRTTLRPLVSTNA). Ser-874 is modified (phosphoserine). Over residues 940–952 (ATSGTGSVASSTA) the composition is skewed to low complexity. The span at 989–999 (PRSTISSTTTV) shows a compositional bias: polar residues. Residues 1003–1015 (PSTSTPSFSTRSP) are compositionally biased toward low complexity. 2 stretches are compositionally biased toward polar residues: residues 1016 to 1026 (NKQQSNGLGKN) and 1054 to 1066 (SASLTYNNGSTSR). Ser-1075 and Ser-1086 each carry phosphoserine. A compositionally biased stretch (polar residues) spans 1100–1111 (LTPQSKDGTAKS). Ser-1121 carries the post-translational modification Phosphoserine.

Its subcellular location is the cytoplasm. The protein resides in the cytoskeleton. It is found in the spindle. May play an important role in the regulation of microtubule assembly and interaction. The polypeptide is 205 kDa microtubule-associated protein (Map205) (Drosophila melanogaster (Fruit fly)).